A 479-amino-acid chain; its full sequence is Tegument protein VP16 homolog (479 aa).

The protein belongs to the herpesviridae tegument protein VP16 protein family. Associates with the VP16-induced complex; binding to host HCFC1 activates VP16 for association with the octamer motif-binding host protein POU2F1, to form a multiprotein-DNA complex responsible for activating transcription of the viral immediate early genes.

Its subcellular location is the virion tegument. The protein resides in the host nucleus. Functionally, transcriptional activator of immediate-early (IE) gene products (alpha genes). Acts as a key activator of lytic infection by initiating the lytic program through the assembly of the transcriptional regulatory VP16-induced complex composed of VP16 and two cellular factors, HCFC1 and POU2F1. VP16-induced complex represents a regulatory switch: when it is on, it promotes IE-gene expression and thus lytic infection, and when it is off, it limits IE-gene transcription favoring latent infection. Its function is as follows. May play a role in the aggregation of tegument proteins around nucleocapsids during virus morphogenesis. The sequence is that of Tegument protein VP16 homolog from Equus caballus (Horse).